A 295-amino-acid chain; its full sequence is Methionine aminopeptidase (295 aa).

Histidine 62 contacts substrate. Residues aspartate 82, aspartate 93, and histidine 153 each coordinate a divalent metal cation. Histidine 161 serves as a coordination point for substrate. Residues glutamate 187 and glutamate 280 each contribute to the a divalent metal cation site.

Belongs to the peptidase M24A family. Methionine aminopeptidase archaeal type 2 subfamily. Monomer. The cofactor is Co(2+). Requires Zn(2+) as cofactor. Mn(2+) is required as a cofactor. It depends on Fe(2+) as a cofactor.

The enzyme catalyses Release of N-terminal amino acids, preferentially methionine, from peptides and arylamides.. Its function is as follows. Removes the N-terminal methionine from nascent proteins. The N-terminal methionine is often cleaved when the second residue in the primary sequence is small and uncharged (Met-Ala-, Cys, Gly, Pro, Ser, Thr, or Val). The sequence is that of Methionine aminopeptidase from Pyrococcus abyssi (strain GE5 / Orsay).